The sequence spans 660 residues: MTLNLRCKVVEPSWKVLQHYASYVRNTAAVSLVRHHARLSTSTNLTSKAAEPITALSEFPVEKIRNFSIIAHIDHGKSTLADRLLEIAGVIPKSAENKQVLDKLQVERERGITVKAQTASMLYEYHGETYLLNLIDTPGHVDFNYEVSRSLAACQGVLLVVDASQGVQAQTVANFFLAFEADLKIIPVLNKIDMKSANPDRIANQLQRVFDIEPEETMKVSAKDGTGIDQLLPTIIEKIPPPTCDQQKPLKALLFDSWYDRYRGVIGLLAIKDGKLTKGEKIQSAFSKKQYEILDLGILYPNEKSTKTLGSGQVGFIVAGMKSTKEAQIGDTFCHVNCPVDALPGFKPAKSMVYAGLFPFNKSEFEVLRSAIHKLTLNDSSVSVHNDNSAALGPGFRLGFLGLLHMDVFNQRLEQEYDVSVVITSPNVPFKGKYRYASILRKEHEEMVITTPSQFPDIAQVVEYLEPVVMGTIIFPDKYMGKMLNLCQSKRGQQVNISYIDETRVMLKYILPLHEIVIDFYDQLKSLTSGYASFDYEDHGYRSATLAKMEILLNGTPVDALTTVVHEEKARITGKQVCQKLKEAIPRQLYEVAIQATIRGKVVARETIRAVRKDVTAKCYGGDITRKLKLLKRQKEGKSRLKMIGKIEVPKEAFLAVLKR.

A tr-type G domain is found at 62–243 (EKIRNFSIIA…TIIEKIPPPT (182 aa)). GTP-binding positions include 71 to 78 (AHIDHGKS), 136 to 140 (DTPGH), and 190 to 193 (NKID).

This sequence belongs to the TRAFAC class translation factor GTPase superfamily. Classic translation factor GTPase family. LepA subfamily.

The protein localises to the mitochondrion inner membrane. The catalysed reaction is GTP + H2O = GDP + phosphate + H(+). In terms of biological role, promotes mitochondrial protein synthesis. May act as a fidelity factor of the translation reaction, by catalyzing a one-codon backward translocation of tRNAs on improperly translocated ribosomes. Binds to mitochondrial ribosomes in a GTP-dependent manner. The protein is Translation factor GUF1 homolog, mitochondrial of Trichoplax adhaerens (Trichoplax reptans).